The sequence spans 365 residues: Probable dual-specificity RNA methyltransferase RlmN (365 aa).

Glutamate 99 serves as the catalytic Proton acceptor. Residues 105–344 enclose the Radical SAM core domain; the sequence is QSYGLSVCVT…CVVRQEHGTD (240 aa). Cysteine 112 and cysteine 349 are joined by a disulfide. [4Fe-4S] cluster contacts are provided by cysteine 119, cysteine 123, and cysteine 126. Residues 171–172, serine 203, 227–229, and asparagine 305 contribute to the S-adenosyl-L-methionine site; these read GE and SLH. Catalysis depends on cysteine 349, which acts as the S-methylcysteine intermediate.

It belongs to the radical SAM superfamily. RlmN family. Requires [4Fe-4S] cluster as cofactor.

The protein resides in the cytoplasm. The enzyme catalyses adenosine(2503) in 23S rRNA + 2 reduced [2Fe-2S]-[ferredoxin] + 2 S-adenosyl-L-methionine = 2-methyladenosine(2503) in 23S rRNA + 5'-deoxyadenosine + L-methionine + 2 oxidized [2Fe-2S]-[ferredoxin] + S-adenosyl-L-homocysteine. The catalysed reaction is adenosine(37) in tRNA + 2 reduced [2Fe-2S]-[ferredoxin] + 2 S-adenosyl-L-methionine = 2-methyladenosine(37) in tRNA + 5'-deoxyadenosine + L-methionine + 2 oxidized [2Fe-2S]-[ferredoxin] + S-adenosyl-L-homocysteine. In terms of biological role, specifically methylates position 2 of adenine 2503 in 23S rRNA and position 2 of adenine 37 in tRNAs. The chain is Probable dual-specificity RNA methyltransferase RlmN from Lactococcus lactis subsp. cremoris (strain MG1363).